Here is a 684-residue protein sequence, read N- to C-terminus: MTLQTTPSTPLVQDPPVPATLVHAAAQHPLEQLSAEEIHEARRILAEAGLVGESTRFAYLGLIEPPKTTRQGDVTGAARLVRAMLWDAAQSRSLDVRLSLATGLVVDRRELNPEADGQLPVLLEEFGIIEDILSEDPQWNAALTARGLTPAQVRVAPLSAGVFEYGNEEGKRLLRGLGFRQDHPADHPWAHPIDGLVAFVDVENRRVNHLIDDGPVPVPEVNGNYTDPAIRGELRTDLLPIEIMQPEGPSFTLEGNHLSWAGWDLRVGFDAREGLVLHQLHHSHKGRRRPVIHRASISEMVVPYGDPSPYRSWQNYFDSGEYLVGRDANSLRLGCDCLGDITYMSPVVADDFGNPRTIENGICIHEEDAGILWKHTDEWAGSDEVRRNRRLVVSFFTTVGNYDYGFYWYLYLDGTIEFEAKATGIVFTAALPDKDYAYASEIAPGLGAPYHQHLFSARLDMMIDGDANRVEELDLVRLPKGPGNPHGNAFTQKRTLLARESEAVRDADGAKGRVWHISNPDSLNHLGHPVGYTLYPEGNPTLAMADDSSIASRAAFARHHLWVTRHAEEELYAAGDFVNQHPGGAVLPAYVAQDRDIDGQDLVVWHSFGLTHFPRPEDWPIMPVDTTGFTLKPHGFFDENPTLNVPSSAAGHCGTGSEREHAAPGGTAVGHSGPDTGGQGHCGH.

316-327 (YFDSGEYLVGRD) is a binding site for substrate. Residue Asp-318 is the Proton acceptor of the active site. A disulfide bridge links Cys-337 with Cys-363. 399 to 404 (VGNYDY) serves as a coordination point for substrate. The active-site Schiff-base intermediate with substrate; via topaquinone is the Tyr-402. Tyr-402 bears the 2',4',5'-topaquinone mark. Cu cation is bound by residues His-451 and His-453. Ca(2+)-binding residues include Asp-460, Glu-500, Tyr-590, and Asp-601. Asp-460 lines the Mn(2+) pocket. Position 601 (Asp-601) interacts with Mn(2+). His-612 is a binding site for Cu cation. The disordered stretch occupies residues 647 to 684 (SSAAGHCGTGSEREHAAPGGTAVGHSGPDTGGQGHCGH). Gly residues predominate over residues 675-684 (DTGGQGHCGH).

Belongs to the copper/topaquinone oxidase family. As to quaternary structure, homodimer. It depends on Cu cation as a cofactor. Zn(2+) is required as a cofactor. Requires Ca(2+) as cofactor. L-topaquinone serves as cofactor. The cofactor is Mn(2+). In terms of processing, topaquinone (TPQ) is generated by copper-dependent autoxidation of a specific tyrosyl residue.

Its subcellular location is the cytoplasm. The catalysed reaction is a primary methyl amine + O2 + H2O = an aldehyde + H2O2 + NH4(+). The enzyme catalyses histamine + O2 + H2O = imidazole-4-acetaldehyde + H2O2 + NH4(+). In terms of biological role, oxidizes histamine. Other amines including phenethylamine, tyramine, tryptamine, putrescine, and benzylamine also serve as substrate. The polypeptide is Histamine oxidase (Arthrobacter globiformis).